Reading from the N-terminus, the 185-residue chain is MINVNEFRPGITFEFENEIYVVISAQHSKQGRGQANVKTKVKNLRTGAITIKTFSGGERVEKAHIEKISMSFLYNDGASIVLMDDSTYEQVAIENTKITWELNFLTEGIKVKLRKFNNEILDIELPAKIELKITSTFDAVRGNTTTNPTKRATLETGYEIDVPLFIKEGESVIVSTEDGKYVSRG.

This sequence belongs to the elongation factor P family.

The protein localises to the cytoplasm. The protein operates within protein biosynthesis; polypeptide chain elongation. Functionally, involved in peptide bond synthesis. Stimulates efficient translation and peptide-bond synthesis on native or reconstituted 70S ribosomes in vitro. Probably functions indirectly by altering the affinity of the ribosome for aminoacyl-tRNA, thus increasing their reactivity as acceptors for peptidyl transferase. The chain is Elongation factor P from Mesomycoplasma hyopneumoniae (strain J / ATCC 25934 / NCTC 10110) (Mycoplasma hyopneumoniae).